The primary structure comprises 257 residues: Snake venom serine protease KN3 (257 aa).

The first 18 residues, 1 to 18 (MVLIRVLANLLILQLSYA), serve as a signal peptide directing secretion. Residues 19-24 (QKSSKL) constitute a propeptide that is removed on maturation. A Peptidase S1 domain is found at 25–248 (VVGGDECNIN…HLDWIKSIIA (224 aa)). 6 disulfide bridges follow: Cys31–Cys162, Cys49–Cys65, Cys97–Cys255, Cys141–Cys209, Cys173–Cys188, and Cys199–Cys224. Catalysis depends on charge relay system residues His64 and Asp109. N-linked (GlcNAc...) asparagine glycosylation is found at Asn120, Asn121, and Asn164. Ser203 acts as the Charge relay system in catalysis.

Belongs to the peptidase S1 family. Snake venom subfamily. Monomer. Expressed by the venom gland.

It localises to the secreted. Its function is as follows. Snake venom serine protease that may act in the hemostasis system of the prey. This chain is Snake venom serine protease KN3, found in Trimeresurus stejnegeri (Chinese green tree viper).